The primary structure comprises 250 residues: Developmental protein SEPALLATA 2 (250 aa).

Residues 3-57 form the MADS-box domain; the sequence is RGRVELKRIENKINRQVTFAKRRNGLLKKAYELSVLCDAEVSLIVFSNRGKLYEF. A coiled-coil region spans residues 85 to 150; it reads AKELENSYRE…CIKTQYMLDQ (66 aa). Positions 88-178 constitute a K-box domain; it reads LENSYREYLK…SMKLEDMIGV (91 aa).

As to quaternary structure, heterodimer with AGAMOUS capable of binding to CArG-box sequences. Interacts with TT16/AGL32.

The protein localises to the nucleus. Functionally, probable transcription factor. Functions with SEPALLATA1/AGL2 and SEPALLATA3/AGL9 to ensure proper development of petals, stamens and carpels and to prevent the indeterminate growth of the flower meristem. Forms a heterodimer via the K-box domain with AG, that could be involved in genes regulation during floral meristem development. This chain is Developmental protein SEPALLATA 2 (SEP2), found in Arabidopsis thaliana (Mouse-ear cress).